The primary structure comprises 364 residues: 2-oxoglutarate-dependent dioxygenase imqE (364 aa).

A disordered region spans residues 73 to 92 (KQKAAHPPGPNPQRGWSGIG). Residues 199 to 315 (DGSELRLLHY…RWSAAYFFKA (117 aa)) form the Fe2OG dioxygenase domain. Fe cation-binding residues include H227, D229, and H287. R306 contacts 2-oxoglutarate.

The protein belongs to the iron/ascorbate-dependent oxidoreductase family. The cofactor is Fe(2+).

It participates in secondary metabolite biosynthesis. Functionally, 2-oxoglutarate-dependent dioxygenase; part of the gene cluster that mediates the biosynthesis of imizoquins A to D, tripeptide-derived alkaloids that serve a protective role against oxidative stress that are essential for normal germination. ImqB is a canonical three-module NRPS that assembles the tripeptide backbone of the imizoquins via condensation of Trp, Tyr, and Leu-derived precursors. N-methylation by imqF and phenol oxidation by imqC, followed by cyclization via the FAD-dependent oxidase imqH carry out the three-step transformation of L-tyrosine into tetrahydroisoquinoline. Importantly, this sequence requires the presence of a free amine in the tyrosine moiety, indicating that isoquinoline formation occurs prior to peptide bond formation. The imidazolidin-4-one ring of imizoquins could form following additional oxidation of the methyl-derived bridgehead carbon by imqH. Lastly, O-methylation by imqG and leucine hydroxylation by imqE complete biosynthesis of the imizoquins. This Aspergillus flavus (strain ATCC 200026 / FGSC A1120 / IAM 13836 / NRRL 3357 / JCM 12722 / SRRC 167) protein is 2-oxoglutarate-dependent dioxygenase imqE.